Here is a 170-residue protein sequence, read N- to C-terminus: uncharacterized protein (170 aa).

This is an uncharacterized protein from Ureaplasma parvum serovar 3 (strain ATCC 700970).